The sequence spans 297 residues: 4-diphosphocytidyl-2-C-methyl-D-erythritol kinase (297 aa).

Lys-22 is a catalytic residue. 111 to 121 contacts ATP; the sequence is PSQAGMGGGSS. Asp-153 is an active-site residue.

This sequence belongs to the GHMP kinase family. IspE subfamily.

The enzyme catalyses 4-CDP-2-C-methyl-D-erythritol + ATP = 4-CDP-2-C-methyl-D-erythritol 2-phosphate + ADP + H(+). It participates in isoprenoid biosynthesis; isopentenyl diphosphate biosynthesis via DXP pathway; isopentenyl diphosphate from 1-deoxy-D-xylulose 5-phosphate: step 3/6. Its function is as follows. Catalyzes the phosphorylation of the position 2 hydroxy group of 4-diphosphocytidyl-2C-methyl-D-erythritol. The sequence is that of 4-diphosphocytidyl-2-C-methyl-D-erythritol kinase from Polaromonas naphthalenivorans (strain CJ2).